The following is a 301-amino-acid chain: B3 domain-containing protein At5g18090 (301 aa).

Residues 18–113 (FFKILRSADL…CFTVDIYQID (96 aa)) constitute a DNA-binding region (TF-B3 1). Disordered regions lie at residues 123–142 (SATI…NNIY) and 153–194 (SWSE…KMKV). Residues 133–142 (NKREQRNNIY) are compositionally biased toward basic and acidic residues. Positions 209–301 (VPEFTLTIKK…PTEMLVRVSK (93 aa)) form a DNA-binding region, TF-B3 2.

The protein localises to the nucleus. The sequence is that of B3 domain-containing protein At5g18090 from Arabidopsis thaliana (Mouse-ear cress).